The chain runs to 227 residues: Nudix hydrolase 27, chloroplastic (227 aa).

The transit peptide at 1–44 (MAVKASGFIGKSAISVHLDFSSFPVKFSCLKQFSVSSPKPLVVL) directs the protein to the chloroplast. Residues 61 to 208 (GYRKNVGICL…KRPVYEHVIK (148 aa)) form the Nudix hydrolase domain. A Nudix box motif is present at residues 94–115 (GGADEGEDLRNAAFRELREETG). Positions 109 and 113 each coordinate Mn(2+).

This sequence belongs to the Nudix hydrolase family. The cofactor is Mg(2+). Mn(2+) is required as a cofactor. Expressed in roots, leaves, stems and inflorescences.

The protein localises to the plastid. It localises to the chloroplast. Mediates the hydrolysis of some nucleoside diphosphate derivatives. Can use diadenosine 5',5'''-P(1)P(5) pentaphosphate (Ap(5)A) as substrates. The sequence is that of Nudix hydrolase 27, chloroplastic (NUDT27) from Arabidopsis thaliana (Mouse-ear cress).